Consider the following 192-residue polypeptide: UPF0149 protein VP2588 (192 aa).

This sequence belongs to the UPF0149 family.

The protein is UPF0149 protein VP2588 of Vibrio parahaemolyticus serotype O3:K6 (strain RIMD 2210633).